The primary structure comprises 619 residues: Putative transcription activator BRLF1 homolog (619 aa).

Disordered regions lie at residues 301 to 389 (LRDS…ETQS) and 563 to 603 (GLVS…SDEM). 2 stretches are compositionally biased toward low complexity: residues 371-389 (EAPQ…ETQS) and 567-582 (QQQA…GGPP). A compositionally biased stretch (polar residues) spans 589-598 (QEQQQSSTDP).

It belongs to the herpesviridae TAF50 family.

Its function is as follows. Transcription activation. In Connochaetes taurinus (Blue wildebeest), this protein is Putative transcription activator BRLF1 homolog (50).